The primary structure comprises 165 residues: UPF0303 protein Bcenmc03_1534 (165 aa).

It belongs to the UPF0303 family.

The sequence is that of UPF0303 protein Bcenmc03_1534 from Burkholderia orbicola (strain MC0-3).